The sequence spans 316 residues: MRIVFAGTPDFAAQHLQQLLDESHQVVGVYTQPDRPAGRGKKPQPSAVKKLALEHQLPVYQPESLKSEEDQAALADLKPDVMVVVAYGLLLPQAVLDIPTKGCLNVHGSLLPRWRGAAPIQRAIWAGDLESGVCIMQMEAGLDTGPVLHEERCAISPDETSASLYHKLESLGPEALTKVLKDLDGYQSQAKPQSDANATYAKKLTKQEGKIDWTQPAAFIERCVRAFNPWPMSWCQSEHLKAGQNTVKIHAAELIQGASNKGPGTIINSTHEGIDVVTGDGILRITQAQMPGKKAQPASTLVNGYSNVFSPGLELQ.

109–112 (SLLP) contributes to the (6S)-5,6,7,8-tetrahydrofolate binding site.

It belongs to the Fmt family.

The catalysed reaction is L-methionyl-tRNA(fMet) + (6R)-10-formyltetrahydrofolate = N-formyl-L-methionyl-tRNA(fMet) + (6S)-5,6,7,8-tetrahydrofolate + H(+). Its function is as follows. Attaches a formyl group to the free amino group of methionyl-tRNA(fMet). The formyl group appears to play a dual role in the initiator identity of N-formylmethionyl-tRNA by promoting its recognition by IF2 and preventing the misappropriation of this tRNA by the elongation apparatus. This chain is Methionyl-tRNA formyltransferase, found in Idiomarina loihiensis (strain ATCC BAA-735 / DSM 15497 / L2-TR).